The chain runs to 86 residues: Neurotoxin LmNaTx35.2 (86 aa).

The signal sequence occupies residues 1-21; the sequence is MQLKIQLLMLVLMTVLTGVLG. The LCN-type CS-alpha/beta domain maps to 22-85; sequence KDGYVVHEDT…VYGDKGTYCW (64 aa). 4 disulfides stabilise this stretch: Cys33–Cys84, Cys37–Cys60, Cys46–Cys65, and Cys50–Cys67.

This sequence belongs to the long (4 C-C) scorpion toxin superfamily. Sodium channel inhibitor family. Alpha subfamily. In terms of tissue distribution, expressed by the venom gland.

The protein resides in the secreted. Binds voltage-independently at site-3 of voltage-gated sodium channels (Nav) and inhibits the inactivation of the activated channels, thereby blocking neuronal transmission. In Lychas mucronatus (Chinese swimming scorpion), this protein is Neurotoxin LmNaTx35.2.